The following is a 1822-amino-acid chain: Integrin beta-4 (1822 aa).

The N-terminal stretch at 1–27 (MAGPRPSPWARLLLAALISVSLSGTLA) is a signal peptide. Residues 28-710 (NRCKKAPVKS…HKKKDCPPGS (683 aa)) lie on the Extracellular side of the membrane. One can recognise a PSI domain in the interval 29 to 73 (RCKKAPVKSCTECVRVDKDCAYCTDEMFRDRRCNTQAELLAAGCQ). Cystine bridges form between Cys30–Cys48, Cys38–Cys455, Cys41–Cys61, Cys51–Cys72, Cys245–Cys288, Cys457–Cys476, Cys468–Cys479, and Cys481–Cys490. The VWFA domain maps to 131–329 (DLYILMDFSN…IPIFAVTNYS (199 aa)). Mg(2+) contacts are provided by Ser139 and Ser141. Ca(2+)-binding residues include Ser141, Asp144, Asp145, and Asp176. The involved in NRG1- and IGF1-binding stretch occupies residues 194–199 (WPNSDP). Ca(2+) is bound by residues Asn228, Asp230, Pro232, and Glu233. Mg(2+) is bound at residue Glu233. N-linked (GlcNAc...) asparagine glycosylation occurs at Asn327. Ca(2+) is bound at residue Glu350. 4 consecutive I-EGF domains span residues 457–491 (CELQ…QTCN), 492–537 (CSTG…QFCE), 538–574 (YDNF…PSCD), and 575–615 (CPLS…TICE). Asn491 carries an N-linked (GlcNAc...) asparagine glycan. Disulfide bonds link Cys492–Cys520, Cys503–Cys518, Cys512–Cys523, Cys525–Cys536, Cys543–Cys557, Cys551–Cys562, Cys564–Cys573, Cys575–Cys598, Cys582–Cys596, Cys590–Cys601, and Cys603–Cys614. Residue Asn579 is glycosylated (N-linked (GlcNAc...) asparagine). Residue Asn617 is glycosylated (N-linked (GlcNAc...) asparagine). 4 cysteine pairs are disulfide-bonded: Cys626–Cys671, Cys632–Cys651, Cys635–Cys648, and Cys680–Cys706. An N-linked (GlcNAc...) asparagine glycan is attached at Asn695. A helical membrane pass occupies residues 711 to 733 (FWWLIPLLLLLLPLLALLLLLCW). The tract at residues 732-749 (CWKYCACCKACLALLPCC) is palmitoylated on several cysteines. The Cytoplasmic segment spans residues 734–1822 (KYCACCKACL…THMDQQFFQT (1089 aa)). 3 positions are modified to phosphoserine: Ser771, Ser1069, and Ser1119. A Calx-beta domain is found at 979–1084 (VNITIIKEQA…QVRRFHVQLS (106 aa)). The tract at residues 1113–1140 (TSQMLSSQPPPHGDLGAPQNPNAKAAGS) is disordered. Fibronectin type-III domains follow at residues 1129–1218 (APQN…THQE) and 1222–1321 (EPGR…TQPK). A disordered region spans residues 1400-1444 (LSASSGRSSDAEAPHGPPDDGGAGGKGGSLPRSATPGPPGEHLVN). Residues 1418 to 1427 (DDGGAGGKGG) are compositionally biased toward gly residues. 3 positions are modified to phosphoserine: Ser1454, Ser1457, and Ser1474. Residue Thr1487 is modified to Phosphothreonine. Position 1494 is a phosphoserine (Ser1494). The tract at residues 1495 to 1525 (LTRSEHSHSTTLPRDYSTLTSVSSHDSRLTA) is disordered. Polar residues predominate over residues 1503-1518 (STTLPRDYSTLTSVSS). Thr1530 is subject to Phosphothreonine. 2 Fibronectin type-III domains span residues 1530–1625 (TPTR…VHPQ) and 1643–1739 (APGP…SQDG). A Phosphoserine modification is found at Ser1791.

This sequence belongs to the integrin beta chain family. In terms of assembly, heterodimer of an alpha and a beta subunit. Beta-4 associates with alpha-6. Interacts (via cytoplasmic region) with COL17A1 (via cytoplasmic region). Interacts (via cytoplasmic region) with DST isoform 3 (via N-terminus). Isoform beta-4a interacts (via cytoplasmic domain) with DST (via N-terminus). Interacts with RAC1. ITGA6:ITGB4 is found in a ternary complex with NRG1 and ERBB3. ITGA6:ITGB4 is found in a ternary complex with IGF1 and IGF1R. ITGA6:ITGB4 interacts with IGF2. Interacts with TMEM268; this interaction prevents ITGB4 degradation. Palmitoylated by DHHC3 at several cysteines of the membrane-proximal region, enhancing stability and cell surface expression. Palmitoylation also promotes secondary association with tertaspanins. Integrin alpha-6/beta-4 is predominantly expressed by epithelia. Isoform beta-4D is also expressed in colon and placenta. Isoform beta-4E is also expressed in epidermis, lung, duodenum, heart, spleen and stomach.

Its subcellular location is the cell membrane. It localises to the cell junction. The protein localises to the hemidesmosome. Functionally, integrin alpha-6/beta-4 is a receptor for laminin. Plays a critical structural role in the hemidesmosome of epithelial cells. Is required for the regulation of keratinocyte polarity and motility. ITGA6:ITGB4 binds to NRG1 (via EGF domain) and this binding is essential for NRG1-ERBB signaling. ITGA6:ITGB4 binds to IGF1 and this binding is essential for IGF1 signaling. ITGA6:ITGB4 binds to IGF2 and this binding is essential for IGF2 signaling. This Homo sapiens (Human) protein is Integrin beta-4 (ITGB4).